A 177-amino-acid polypeptide reads, in one-letter code: Putative 3-methyladenine DNA glycosylase (177 aa).

Belongs to the DNA glycosylase MPG family.

This chain is Putative 3-methyladenine DNA glycosylase, found in Rickettsia felis (strain ATCC VR-1525 / URRWXCal2) (Rickettsia azadi).